Reading from the N-terminus, the 204-residue chain is RNA-free ribonuclease P (204 aa).

Belongs to the HARP family.

The enzyme catalyses Endonucleolytic cleavage of RNA, removing 5'-extranucleotides from tRNA precursor.. In terms of biological role, RNA-free RNase P that catalyzes the removal of the 5'-leader sequence from pre-tRNA to produce the mature 5'-terminus. The polypeptide is RNA-free ribonuclease P (Ignicoccus hospitalis (strain KIN4/I / DSM 18386 / JCM 14125)).